Here is a 300-residue protein sequence, read N- to C-terminus: NAD kinase (300 aa).

Residue aspartate 75 is the Proton acceptor of the active site. NAD(+) is bound by residues 75-76, 149-150, arginine 177, aspartate 179, 190-195, alanine 214, and glutamine 248; these read DG, ND, and TAYALS.

It belongs to the NAD kinase family. A divalent metal cation serves as cofactor.

The protein resides in the cytoplasm. It catalyses the reaction NAD(+) + ATP = ADP + NADP(+) + H(+). Involved in the regulation of the intracellular balance of NAD and NADP, and is a key enzyme in the biosynthesis of NADP. Catalyzes specifically the phosphorylation on 2'-hydroxyl of the adenosine moiety of NAD to yield NADP. This chain is NAD kinase, found in Burkholderia pseudomallei (strain K96243).